Here is a 233-residue protein sequence, read N- to C-terminus: Lipoprotein-releasing system ATP-binding protein LolD (233 aa).

The ABC transporter domain maps to Leu-9–Arg-233. Gly-45–Ser-52 provides a ligand contact to ATP.

This sequence belongs to the ABC transporter superfamily. Lipoprotein translocase (TC 3.A.1.125) family. As to quaternary structure, the complex is composed of two ATP-binding proteins (LolD) and two transmembrane proteins (LolC and LolE).

It is found in the cell inner membrane. Part of the ABC transporter complex LolCDE involved in the translocation of mature outer membrane-directed lipoproteins, from the inner membrane to the periplasmic chaperone, LolA. Responsible for the formation of the LolA-lipoprotein complex in an ATP-dependent manner. In Shewanella denitrificans (strain OS217 / ATCC BAA-1090 / DSM 15013), this protein is Lipoprotein-releasing system ATP-binding protein LolD.